Here is a 1160-residue protein sequence, read N- to C-terminus: AF4/FMR2 family member 4 (1160 aa).

The span at M1–Q19 shows a compositional bias: basic and acidic residues. Disordered regions lie at residues M1–T42, P78–H289, W322–R908, and N1031–G1070. Positions P115–Q128 are enriched in polar residues. The residue at position 120 (S120) is a Phosphoserine. The segment covering R172–H189 has biased composition (low complexity). Over residues H193–D212 the composition is skewed to basic and acidic residues. Phosphoserine is present on S207. Over residues S229–K247 the composition is skewed to low complexity. 2 stretches are compositionally biased toward polar residues: residues E268–T280 and Y360–Q370. A phosphoserine mark is found at S382, S383, S384, and S387. Over residues P398–E407 the composition is skewed to polar residues. The span at P408–S424 shows a compositional bias: basic and acidic residues. Residues S425–P457 show a composition bias toward low complexity. A phosphoserine mark is found at S482, S485, and S486. Polar residues-rich tracts occupy residues P483 to A496, G505 to T523, and S544 to R555. S544 carries the post-translational modification Phosphoserine. A compositionally biased stretch (basic and acidic residues) spans K563–S581. K578 is covalently cross-linked (Glycyl lysine isopeptide (Lys-Gly) (interchain with G-Cter in SUMO2)). Over residues S594 to N607 the composition is skewed to basic residues. Basic and acidic residues predominate over residues I608–K622. Over residues T641–S657 the composition is skewed to low complexity. At S666 the chain carries Phosphoserine. A Phosphothreonine modification is found at T669. Residues S675, S689, S698, and S701 each carry the phosphoserine modification. A Phosphotyrosine modification is found at Y707. Composition is skewed to basic and acidic residues over residues P725–S756, K764–S784, and E794–L806. S809 carries the post-translational modification Phosphoserine. K817 carries the N6-acetyllysine modification. Position 831 is a phosphoserine (S831). Composition is skewed to low complexity over residues S831 to A859 and P880 to S895. Residues S1040, S1052, S1055, and S1059 each carry the phosphoserine modification. Over residues S1059–G1070 the composition is skewed to low complexity.

The protein belongs to the AF4 family. Component of the super elongation complex (SEC), at least composed of EAF1, EAF2, CDK9, MLLT3/AF9, AFF (AFF1 or AFF4), the P-TEFb complex and ELL (ELL, ELL2 or ELL3). Interacts with ELL2; the interaction is direct and leads to stabilize ELL2 and prevent ELL2 ubiquitination and degradation. Interacts with ELL3; the interaction is direct. In terms of processing, dephosphorylated at Ser-544 by the PNUTS-PP1 complex, promoting RNA polymerase II transcription pause-release. In terms of tissue distribution, highly expressed in testis by Sertoli cells, and at low levels in other tissues.

The protein localises to the nucleus. It localises to the chromosome. In terms of biological role, key component of the super elongation complex (SEC), a complex required to increase the catalytic rate of RNA polymerase II transcription by suppressing transient pausing by the polymerase at multiple sites along the DNA. In the SEC complex, AFF4 acts as a central scaffold that recruits other factors through direct interactions with ELL proteins (ELL, ELL2 or ELL3) and the P-TEFb complex. In Mus musculus (Mouse), this protein is AF4/FMR2 family member 4 (Aff4).